We begin with the raw amino-acid sequence, 496 residues long: MGRGVRVLLLLSLLHCAGGSEGRKTWRRRGQQPPPPPRTEAAPAAGQPVESFPLDFTAVEGNMDSFMAQVKSLAQSLYPCSAQQLNEDLRLHLLLNTSVTCNDGSPAGYYLKESRGSRRWLLFLEGGWYCFNRENCDSRYDTMRRLMSSRDWPRTRTGTGILSSQPEENPYWWNANMVFIPYCSSDVWSGASSKSEKNEYAFMGALIIQEVVRELLGRGLSGAKVLLLAGSSAGGTGVLLNVDRVAEQLEKLGYPAIQVRGLADSGWFLDNKQYRHTDCVDTITCAPTEAIRRGIRYWNGVVPERCRRQFQEGEEWNCFFGYKVYPTLRCPVFVVQWLFDEAQLTVDNVHLTGQPVQEGLRLYIQNLGRELRHTLKDVPASFAPACLSHEIIIRSHWTDVQVKGTSLPRALHCWDRSLHDSHKASKTPLKGCPVHLVDSCPWPHCNPSCPTVRDQFTGQEMNVAQFLMHMGFDMQTVAQPQGLEPSELLGMLSNGS.

The signal sequence occupies residues 1–19 (MGRGVRVLLLLSLLHCAGG). The tract at residues 21 to 46 (EGRKTWRRRGQQPPPPPRTEAAPAAG) is disordered. Ser81 bears the Phosphoserine; by FAM20C mark. Asn96 is a glycosylation site (N-linked (GlcNAc...) asparagine). Residues Ser232, Asp340, and His389 each act as charge relay system in the active site.

It belongs to the pectinacetylesterase family. Notum subfamily. In terms of tissue distribution, rarely expressed in adult normal tissues.

Its subcellular location is the secreted. The catalysed reaction is [Wnt protein]-O-(9Z)-hexadecenoyl-L-serine + H2O = [Wnt protein]-L-serine + (9Z)-hexadecenoate + H(+). Functionally, carboxylesterase that acts as a key negative regulator of the Wnt signaling pathway by specifically mediating depalmitoleoylation of WNT proteins. Serine palmitoleoylation of WNT proteins is required for efficient binding to frizzled receptors. This chain is Palmitoleoyl-protein carboxylesterase NOTUM, found in Homo sapiens (Human).